The chain runs to 421 residues: Enolase (421 aa).

A (2R)-2-phosphoglycerate-binding site is contributed by Gln-161. The active-site Proton donor is Glu-203. Asp-240, Glu-283, and Asp-310 together coordinate Mg(2+). The (2R)-2-phosphoglycerate site is built by Lys-335, Arg-364, Ser-365, and Lys-386. Residue Lys-335 is the Proton acceptor of the active site.

The protein belongs to the enolase family. Mg(2+) is required as a cofactor.

It localises to the cytoplasm. The protein localises to the secreted. Its subcellular location is the cell surface. The catalysed reaction is (2R)-2-phosphoglycerate = phosphoenolpyruvate + H2O. It participates in carbohydrate degradation; glycolysis; pyruvate from D-glyceraldehyde 3-phosphate: step 4/5. Catalyzes the reversible conversion of 2-phosphoglycerate (2-PG) into phosphoenolpyruvate (PEP). It is essential for the degradation of carbohydrates via glycolysis. The polypeptide is Enolase (Sulfurimonas denitrificans (strain ATCC 33889 / DSM 1251) (Thiomicrospira denitrificans (strain ATCC 33889 / DSM 1251))).